A 130-amino-acid chain; its full sequence is Protein ApaG (130 aa).

The 125-residue stretch at 3–127 (STITRDIQIT…FSLDSPFSRQ (125 aa)) folds into the ApaG domain.

This is Protein ApaG from Beijerinckia indica subsp. indica (strain ATCC 9039 / DSM 1715 / NCIMB 8712).